Consider the following 201-residue polypeptide: MAATALLEAGLARVLFYPTLLYTLFRGKVPGRAHRDWYHRIDPTVLLGALPLRSLTRQLVQDENVRGVITMNEEYETRFLCNSSQEWKRLGVEQLRLSTVDMTGIPTLDNLQKGVQFALKYQSLGQCVYVHCKAGRSRSATMVAAYLIQVHKWSPEEAVRAIAKIRSYIHIRPGQLDVLKEFHKQITARATKDGTFVISKT.

Residues 1–27 constitute a mitochondrion transit peptide; sequence MAATALLEAGLARVLFYPTLLYTLFRG. The Tyrosine-protein phosphatase domain occupies 37-188; it reads WYHRIDPTVL…LKEFHKQITA (152 aa). Cys-132 (phosphocysteine intermediate) is an active-site residue.

Belongs to the protein-tyrosine phosphatase family. Non-receptor class dual specificity subfamily. In terms of assembly, interacts with STYXL1; the interaction inhibits PTPMT1 catalytic activity.

It is found in the mitochondrion inner membrane. The enzyme catalyses a 1,2-diacyl-sn-glycero-3-phospho-(1'-sn-glycero-3'-phosphate) + H2O = a 1,2-diacyl-sn-glycero-3-phospho-(1'-sn-glycerol) + phosphate. It carries out the reaction O-phospho-L-tyrosyl-[protein] + H2O = L-tyrosyl-[protein] + phosphate. The catalysed reaction is O-phospho-L-seryl-[protein] + H2O = L-seryl-[protein] + phosphate. It catalyses the reaction O-phospho-L-threonyl-[protein] + H2O = L-threonyl-[protein] + phosphate. The enzyme catalyses 1,2-di-(9Z-octadecenoyl)-sn-glycero-3-phospho-(1'-sn-glycerol-3'-phosphate) + H2O = 1,2-di-(9Z-octadecenoyl)-sn-glycero-3-phospho-(1'-sn-glycerol) + phosphate. It carries out the reaction 1,2-dioctanoyl-sn-glycero-3-phospho-(1D-myo-inositol-5-phosphate) + H2O = 1,2-dioctanoyl-sn-glycero-3-phospho-(1D-myo-inositol) + phosphate. The catalysed reaction is a 1-acyl-2-hexanoyl-sn-glycero-3-phospho-(1D-myo-inositol-5-phosphate) + H2O = a 1-acyl-2-hexanoyl-sn-glycero-3-phospho-(1D-myo-inositol) + phosphate. It catalyses the reaction 1,2-dibutyryl-sn-glycero-3-phospho-(1D-myo-inositol-5-phosphate) + H2O = 1,2-dibutyryl-sn-glycero-3-phospho-(1D-myo-inositol) + phosphate. It functions in the pathway phospholipid metabolism; phosphatidylglycerol biosynthesis; phosphatidylglycerol from CDP-diacylglycerol: step 2/2. Lipid phosphatase which dephosphorylates phosphatidylglycerophosphate (PGP) to phosphatidylglycerol (PG). PGP is an essential intermediate in the biosynthetic pathway of cardiolipin, a mitochondrial-specific phospholipid regulating the membrane integrity and activities of the organelle. Has also been shown to display phosphatase activity toward phosphoprotein substrates, specifically mediates dephosphorylation of mitochondrial proteins, thereby playing an essential role in ATP production. Has probably a preference for proteins phosphorylated on Ser and/or Thr residues compared to proteins phosphorylated on Tyr residues. Probably involved in regulation of insulin secretion in pancreatic beta cells. May prevent intrinsic apoptosis, probably by regulating mitochondrial membrane integrity. The sequence is that of Phosphatidylglycerophosphatase and protein-tyrosine phosphatase 1 from Homo sapiens (Human).